The primary structure comprises 288 residues: Ras-like protein 1 (288 aa).

Residue 11-18 (GGGGVGKS) coordinates GTP. The short motif at 33-41 (YDPTIEDSY) is the Effector region element. Residues 58–62 (DTAGQ) and 117–120 (NKCD) each bind GTP. The tract at residues 176–288 (EKQQQQQQQQ…KSKNGCCVIV (113 aa)) is disordered. 2 stretches are compositionally biased toward low complexity: residues 178-216 (QQQQ…NNNN) and 246-281 (PNQS…SKSK). Residue Cys-284 is the site of S-palmitoyl cysteine attachment. A Cysteine methyl ester modification is found at Cys-285. Cys-285 is lipidated: S-farnesyl cysteine. Positions 286–288 (VIV) are cleaved as a propeptide — removed in mature form.

The protein belongs to the small GTPase superfamily. Ras family.

The protein resides in the cell membrane. It carries out the reaction GTP + H2O = GDP + phosphate + H(+). With respect to regulation, alternates between an inactive form bound to GDP and an active form bound to GTP. Activated by a guanine nucleotide-exchange factor (GEF) and inactivated by a GTPase-activating protein (GAP). Required for the regulation of both a MAP kinase signaling pathway and a cAMP signaling pathway. The activation of these pathways contributes to the pathogenicity of the cells through the induction of the morphological transition from the yeast to the polarized filamentous form. The chain is Ras-like protein 1 (RAS1) from Candida albicans (strain WO-1) (Yeast).